The sequence spans 251 residues: ATP synthase subunit a (251 aa).

6 helical membrane-spanning segments follow: residues 30–50 (NSNE…VVAL), 86–106 (FFPF…LGLF), 116–136 (IAIT…VGFW), 145–165 (FFSP…IEIV), 195–215 (FMLM…IIPL), and 219–239 (IALT…FAIL).

The protein belongs to the ATPase A chain family. As to quaternary structure, F-type ATPases have 2 components, CF(1) - the catalytic core - and CF(0) - the membrane proton channel. CF(1) has five subunits: alpha(3), beta(3), gamma(1), delta(1), epsilon(1). CF(0) has three main subunits: a(1), b(2) and c(9-12). The alpha and beta chains form an alternating ring which encloses part of the gamma chain. CF(1) is attached to CF(0) by a central stalk formed by the gamma and epsilon chains, while a peripheral stalk is formed by the delta and b chains.

The protein localises to the cell inner membrane. Its function is as follows. Key component of the proton channel; it plays a direct role in the translocation of protons across the membrane. In Acidiphilium cryptum (strain JF-5), this protein is ATP synthase subunit a.